Here is a 271-residue protein sequence, read N- to C-terminus: Aquaporin-2 (271 aa).

Residues 1–11 (MWELRSIAFSR) lie on the Cytoplasmic side of the membrane. A helical membrane pass occupies residues 12-32 (AVFAEFLATLLFVFFGLGSAL). The Extracellular portion of the chain corresponds to 33–40 (NWPQALPS). Residues 41–59 (VLQIAMAFGLGIGTLVQAL) traverse the membrane as a helical segment. Topologically, residues 60–64 (GHISG) are cytoplasmic. The segment at residues 65–74 (AHINPAVTVA) is an intramembrane region (discontinuously helical). Residues 68 to 70 (NPA) carry the NPA 1 motif. At 75–85 (CLVGCHVSVLR) the chain is on the cytoplasmic side. A helical membrane pass occupies residues 86–107 (AAFYVAAQLLGAVAGAALLHEI). The Extracellular segment spans residues 108-127 (TPADIRGDLAVNALSNSTTA). Asn123 is a glycosylation site (N-linked (GlcNAc...) asparagine). A helical membrane pass occupies residues 128–148 (GQAVTVELFLTLQLVLCIFAS). The Cytoplasmic segment spans residues 149-156 (TDERRGEN). A helical transmembrane segment spans residues 157-176 (PGTPALSIGFSVALGHLLGI). The Extracellular segment spans residues 177–180 (HYTG). The discontinuously helical intramembrane region spans 181 to 193 (CSMNPARSLAPAV). The short motif at 184 to 186 (NPA) is the NPA 2 element. Residues 194 to 201 (VTGKFDDH) lie on the Extracellular side of the membrane. The helical transmembrane segment at 202-222 (WVFWIGPLVGAILGSLLYNYV) threads the bilayer. At 223–271 (LFPPAKSLSERLAVLKGLEPDTDWEEREVRRRQSVELHSPQSLPRGTKA) the chain is on the cytoplasmic side. The tract at residues 248–271 (EREVRRRQSVELHSPQSLPRGTKA) is disordered. Phosphoserine; by PKA is present on Ser256. A compositionally biased stretch (polar residues) spans 261-271 (SPQSLPRGTKA).

It belongs to the MIP/aquaporin (TC 1.A.8) family. Homotetramer. Interacts with micropeptide MIAC; the interaction leads to a reduction of filamentous actin fibers and inhibition of the EREG/EGFR signaling pathway. Ser-256 phosphorylation is necessary and sufficient for expression at the apical membrane. Endocytosis is not phosphorylation-dependent. Post-translationally, N-glycosylated. In terms of tissue distribution, expressed in collecting tubules in kidney medulla (at protein level). Detected in kidney.

The protein resides in the apical cell membrane. The protein localises to the basolateral cell membrane. It localises to the cell membrane. It is found in the cytoplasmic vesicle membrane. Its subcellular location is the golgi apparatus. The protein resides in the trans-Golgi network membrane. It catalyses the reaction H2O(in) = H2O(out). It carries out the reaction glycerol(in) = glycerol(out). In terms of biological role, forms a water-specific channel that provides the plasma membranes of renal collecting duct with high permeability to water, thereby permitting water to move in the direction of an osmotic gradient. Plays an essential role in renal water homeostasis. Could also be permeable to glycerol. This chain is Aquaporin-2, found in Homo sapiens (Human).